The following is a 267-amino-acid chain: 5'-nucleotidase SurE (267 aa).

4 residues coordinate a divalent metal cation: Asp14, Asp15, Ser45, and Asn100.

This sequence belongs to the SurE nucleotidase family. It depends on a divalent metal cation as a cofactor.

The protein resides in the cytoplasm. The catalysed reaction is a ribonucleoside 5'-phosphate + H2O = a ribonucleoside + phosphate. In terms of biological role, nucleotidase that shows phosphatase activity on nucleoside 5'-monophosphates. This Methanosarcina mazei (strain ATCC BAA-159 / DSM 3647 / Goe1 / Go1 / JCM 11833 / OCM 88) (Methanosarcina frisia) protein is 5'-nucleotidase SurE.